A 245-amino-acid chain; its full sequence is uncharacterized protein (245 aa).

This is an uncharacterized protein from Mycobacterium tuberculosis (strain CDC 1551 / Oshkosh).